The chain runs to 719 residues: Phosphoribosylformylglycinamidine synthase subunit PurL (719 aa).

Residue H47 is part of the active site. 2 residues coordinate ATP: Y50 and K89. Residue E91 coordinates Mg(2+). Residues S92–H95 and R114 each bind substrate. The active-site Proton acceptor is H93. Residue D115 participates in Mg(2+) binding. Residue Q238 coordinates substrate. D266 serves as a coordination point for Mg(2+). Residue E310–Q312 participates in substrate binding. ATP contacts are provided by D488 and G525. N526 serves as a coordination point for Mg(2+). S528 is a substrate binding site.

It belongs to the FGAMS family. Monomer. Part of the FGAM synthase complex composed of 1 PurL, 1 PurQ and 2 PurS subunits.

It localises to the cytoplasm. It catalyses the reaction N(2)-formyl-N(1)-(5-phospho-beta-D-ribosyl)glycinamide + L-glutamine + ATP + H2O = 2-formamido-N(1)-(5-O-phospho-beta-D-ribosyl)acetamidine + L-glutamate + ADP + phosphate + H(+). Its pathway is purine metabolism; IMP biosynthesis via de novo pathway; 5-amino-1-(5-phospho-D-ribosyl)imidazole from N(2)-formyl-N(1)-(5-phospho-D-ribosyl)glycinamide: step 1/2. Functionally, part of the phosphoribosylformylglycinamidine synthase complex involved in the purines biosynthetic pathway. Catalyzes the ATP-dependent conversion of formylglycinamide ribonucleotide (FGAR) and glutamine to yield formylglycinamidine ribonucleotide (FGAM) and glutamate. The FGAM synthase complex is composed of three subunits. PurQ produces an ammonia molecule by converting glutamine to glutamate. PurL transfers the ammonia molecule to FGAR to form FGAM in an ATP-dependent manner. PurS interacts with PurQ and PurL and is thought to assist in the transfer of the ammonia molecule from PurQ to PurL. This is Phosphoribosylformylglycinamidine synthase subunit PurL from Ruegeria pomeroyi (strain ATCC 700808 / DSM 15171 / DSS-3) (Silicibacter pomeroyi).